The following is a 469-amino-acid chain: 3-isopropylmalate dehydratase large subunit (469 aa).

3 residues coordinate [4Fe-4S] cluster: Cys347, Cys410, and Cys413.

This sequence belongs to the aconitase/IPM isomerase family. LeuC type 1 subfamily. In terms of assembly, heterodimer of LeuC and LeuD. [4Fe-4S] cluster is required as a cofactor.

The catalysed reaction is (2R,3S)-3-isopropylmalate = (2S)-2-isopropylmalate. Its pathway is amino-acid biosynthesis; L-leucine biosynthesis; L-leucine from 3-methyl-2-oxobutanoate: step 2/4. Catalyzes the isomerization between 2-isopropylmalate and 3-isopropylmalate, via the formation of 2-isopropylmaleate. The sequence is that of 3-isopropylmalate dehydratase large subunit from Burkholderia mallei (strain NCTC 10247).